Consider the following 159-residue polypeptide: Ribosomal RNA large subunit methyltransferase H (159 aa).

S-adenosyl-L-methionine-binding positions include Leu-76, Gly-108, and 127–132 (FSPMTF).

The protein belongs to the RNA methyltransferase RlmH family. In terms of assembly, homodimer.

Its subcellular location is the cytoplasm. The catalysed reaction is pseudouridine(1915) in 23S rRNA + S-adenosyl-L-methionine = N(3)-methylpseudouridine(1915) in 23S rRNA + S-adenosyl-L-homocysteine + H(+). Its function is as follows. Specifically methylates the pseudouridine at position 1915 (m3Psi1915) in 23S rRNA. The polypeptide is Ribosomal RNA large subunit methyltransferase H (Alkaliphilus oremlandii (strain OhILAs) (Clostridium oremlandii (strain OhILAs))).